The chain runs to 263 residues: 4-hydroxy-tetrahydrodipicolinate reductase (263 aa).

NAD(+)-binding positions include 7-12 (GFKGRM), 96-98 (GTT), and 122-125 (APNF). Residue His152 is the Proton donor/acceptor of the active site. (S)-2,3,4,5-tetrahydrodipicolinate is bound at residue His153. Lys156 functions as the Proton donor in the catalytic mechanism. Position 162–163 (162–163 (GT)) interacts with (S)-2,3,4,5-tetrahydrodipicolinate.

Belongs to the DapB family.

Its subcellular location is the cytoplasm. It carries out the reaction (S)-2,3,4,5-tetrahydrodipicolinate + NAD(+) + H2O = (2S,4S)-4-hydroxy-2,3,4,5-tetrahydrodipicolinate + NADH + H(+). It catalyses the reaction (S)-2,3,4,5-tetrahydrodipicolinate + NADP(+) + H2O = (2S,4S)-4-hydroxy-2,3,4,5-tetrahydrodipicolinate + NADPH + H(+). The protein operates within amino-acid biosynthesis; L-lysine biosynthesis via DAP pathway; (S)-tetrahydrodipicolinate from L-aspartate: step 4/4. Its function is as follows. Catalyzes the conversion of 4-hydroxy-tetrahydrodipicolinate (HTPA) to tetrahydrodipicolinate. The polypeptide is 4-hydroxy-tetrahydrodipicolinate reductase (Listeria innocua serovar 6a (strain ATCC BAA-680 / CLIP 11262)).